The following is a 463-amino-acid chain: Glutamate--tRNA ligase (463 aa).

A 'HIGH' region motif is present at residues 10 to 20 (PSPTGYLHIGG). The 'KMSKS' region motif lies at 252–256 (KLSKR). Position 255 (Lys-255) interacts with ATP.

Belongs to the class-I aminoacyl-tRNA synthetase family. Glutamate--tRNA ligase type 1 subfamily. Monomer.

Its subcellular location is the cytoplasm. The enzyme catalyses tRNA(Glu) + L-glutamate + ATP = L-glutamyl-tRNA(Glu) + AMP + diphosphate. Functionally, catalyzes the attachment of glutamate to tRNA(Glu) in a two-step reaction: glutamate is first activated by ATP to form Glu-AMP and then transferred to the acceptor end of tRNA(Glu). The protein is Glutamate--tRNA ligase of Mycoplasmopsis agalactiae (strain NCTC 10123 / CIP 59.7 / PG2) (Mycoplasma agalactiae).